The following is a 993-amino-acid chain: UPF0182 protein Sare_4110 (993 aa).

Transmembrane regions (helical) follow at residues 18–38 (IGVLVGVFVLFTLLGWGVQAW), 61–81 (LLLFVTVGLAMAVVVGGNLWL), 110–130 (LGTWFAVVSVVVGLFAGLSAQ), 171–191 (GVAFTAVVLALIGALAVHYVF), 209–229 (AHLSALVAVFVLLKAVAYVLD), 260–280 (ILAYISVVVAIAVLVFSNAWM), and 283–303 (LVWPGISLALLGVSAVAIGGI). Disordered regions lie at residues 892–937 (QGEK…ADAA) and 974–993 (EQAAGPGSAATPTGSPSPGG). Over residues 900-929 (STPPPSGETPAPTPTPTPTPSSPSVTPPPV) the composition is skewed to pro residues. Positions 976–993 (AAGPGSAATPTGSPSPGG) are enriched in low complexity.

The protein belongs to the UPF0182 family.

The protein localises to the cell membrane. In Salinispora arenicola (strain CNS-205), this protein is UPF0182 protein Sare_4110.